We begin with the raw amino-acid sequence, 126 residues long: Large ribosomal subunit protein bL17 (126 aa).

This sequence belongs to the bacterial ribosomal protein bL17 family. As to quaternary structure, part of the 50S ribosomal subunit. Contacts protein L32.

This is Large ribosomal subunit protein bL17 from Lysinibacillus sphaericus (strain C3-41).